Consider the following 179-residue polypeptide: Large ribosomal subunit protein uL5 (179 aa).

Belongs to the universal ribosomal protein uL5 family. As to quaternary structure, part of the 50S ribosomal subunit; part of the 5S rRNA/L5/L18/L25 subcomplex. Contacts the 5S rRNA and the P site tRNA. Forms a bridge to the 30S subunit in the 70S ribosome.

This is one of the proteins that bind and probably mediate the attachment of the 5S RNA into the large ribosomal subunit, where it forms part of the central protuberance. In the 70S ribosome it contacts protein S13 of the 30S subunit (bridge B1b), connecting the 2 subunits; this bridge is implicated in subunit movement. Contacts the P site tRNA; the 5S rRNA and some of its associated proteins might help stabilize positioning of ribosome-bound tRNAs. This Thermoanaerobacter sp. (strain X514) protein is Large ribosomal subunit protein uL5.